The primary structure comprises 448 residues: Phosphoglucosamine mutase (448 aa).

S102 functions as the Phosphoserine intermediate in the catalytic mechanism. Positions 102, 242, 244, and 246 each coordinate Mg(2+). At S102 the chain carries Phosphoserine.

It belongs to the phosphohexose mutase family. The cofactor is Mg(2+). In terms of processing, activated by phosphorylation.

The catalysed reaction is alpha-D-glucosamine 1-phosphate = D-glucosamine 6-phosphate. Functionally, catalyzes the conversion of glucosamine-6-phosphate to glucosamine-1-phosphate. The protein is Phosphoglucosamine mutase of Brevibacillus brevis (strain 47 / JCM 6285 / NBRC 100599).